Here is a 427-residue protein sequence, read N- to C-terminus: ATP-dependent RNA helicase DDX39A (427 aa).

Acidic residues predominate over residues 1 to 19 (MAEQDVENELLDYDEDEEP). Residues 1-35 (MAEQDVENELLDYDEDEEPQVPQESTPAPPKKDVK) are disordered. A2 carries the post-translational modification N-acetylalanine. Residue K31 forms a Glycyl lysine isopeptide (Lys-Gly) (interchain with G-Cter in SUMO2) linkage. K35 carries the N6-acetyllysine; alternate modification. K35 is covalently cross-linked (Glycyl lysine isopeptide (Lys-Gly) (interchain with G-Cter in SUMO2); alternate). Position 37 is a phosphoserine (S37). The short motif at 44-72 (SGFRDFLLKPELLRAIVDCGFEHPSEVQH) is the Q motif element. In terms of domain architecture, Helicase ATP-binding spans 75 to 248 (IPQAILGMDV…RKFMQDPMEV (174 aa)). 88–95 (AKSGMGKT) serves as a coordination point for ATP. Glycyl lysine isopeptide (Lys-Gly) (interchain with G-Cter in SUMO2) cross-links involve residues K154 and K162. At T171 the chain carries Phosphothreonine. The DECD box motif lies at 195 to 198 (DECD). Glycyl lysine isopeptide (Lys-Gly) (interchain with G-Cter in SUMO2) cross-links involve residues K240 and K255. Positions 260 to 421 (GLQQYYVKLK…ELPEEIDIST (162 aa)) constitute a Helicase C-terminal domain. S426 is modified (phosphoserine).

The protein belongs to the DEAD box helicase family. DECD subfamily. As to quaternary structure, binds ALYREF/THOC4 and DDX39B/BAT1. Interacts with the apo-AREX complex component SARNP. Interacts with MX1. Interacts with MCM3AP isoform GANP. Interacts with ECD. Interacts with PHAX; this interaction stimulates PHAX RNA binding activity. In terms of processing, SUMOylated by RANBP2; SUMOylation modification affects its ability to bind RNA.

It localises to the nucleus. The protein localises to the cytoplasm. The catalysed reaction is ATP + H2O = ADP + phosphate + H(+). In terms of biological role, helicase that plays an essential role in mRNA export and is involved in multiple steps in RNA metabolism including alternative splicing. Regulates nuclear mRNA export to the cytoplasm through association with ECD. Also involved in spliceosomal uridine-rich small nuclear RNA (U snRNA) export by stimulating the RNA binding of adapter PHAX. Plays a role in the negative regulation of type I IFN production by increasing the nuclear retention of antiviral transcripts and thus reducing their protein expression. Independently of the interferon pathway, plays an antiviral role against alphaviruses by binding to a 5' conserved sequence element in the viral genomic RNA. The protein is ATP-dependent RNA helicase DDX39A (Ddx39a) of Rattus norvegicus (Rat).